Consider the following 431-residue polypeptide: uncharacterized protein (431 aa).

Helical transmembrane passes span 42–62 (LLIG…IGCL) and 74–94 (VMIF…ATML). Asn105 is a glycosylation site (N-linked (GlcNAc...) asparagine; by host). Helical transmembrane passes span 111-131 (LVLF…LFLI), 153-173 (AGVA…AAVP), 202-222 (MWFL…ELAY), 236-256 (VCTF…FRVL), and 279-299 (ATRT…IAFF).

Its subcellular location is the membrane. This is an uncharacterized protein from Homo sapiens (Human).